Here is an 867-residue protein sequence, read N- to C-terminus: Glucans biosynthesis glucosyltransferase H (867 aa).

A disordered region spans residues 71–91 (DDEGRTQLETMPKATRSSISP). Transmembrane regions (helical) follow at residues 139–156 (YILL…TWYM), 194–216 (ILIL…LMGF), 518–540 (VMSY…LQVV), 568–590 (IALL…LLIW), 603–625 (VTIS…MLFH), and 680–702 (FLFW…VFSS).

It belongs to the glycosyltransferase 2 family. OpgH subfamily.

The protein localises to the cell inner membrane. The protein operates within glycan metabolism; osmoregulated periplasmic glucan (OPG) biosynthesis. Functionally, involved in the biosynthesis of osmoregulated periplasmic glucans (OPGs). This is Glucans biosynthesis glucosyltransferase H from Nitrosomonas europaea (strain ATCC 19718 / CIP 103999 / KCTC 2705 / NBRC 14298).